A 329-amino-acid chain; its full sequence is Beta-tectorin (329 aa).

An N-terminal signal peptide occupies residues 1-17 (MVTKAFVLLAIFAEASA). A ZP domain is found at 19-283 (SCAPNKADVI…LSCPVTCDKR (265 aa)). Residues Asn80, Asn104, Asn116, and Asn145 are each glycosylated (N-linked (GlcNAc...) asparagine). A disulfide bridge links Cys204 with Cys264. Gly305 is lipidated: GPI-anchor amidated glycine. Residues 306-329 (FSSLYSFSDVLHHLIMMLGICAVL) constitute a propeptide, removed in mature form.

May form homomeric filament after self-association or heteromeric filament after association with alpha-tectorin. Interacts with CEACAM16. Post-translationally, the presence of a hydrophobic C-terminus preceded by a potential cleavage site strongly suggests that tectorins are synthesized as glycosylphosphatidylinositol-linked, membrane-bound precursors. Tectorins are targeted to the apical surface of the inner ear epithelia by the lipid and proteolytically released into the extracellular compartment.

It localises to the cell membrane. The protein localises to the secreted. It is found in the extracellular space. The protein resides in the extracellular matrix. Its function is as follows. One of the major non-collagenous components of the tectorial membrane. The tectorial membrane is an extracellular matrix of the inner ear that covers the neuroepithelium of the cochlea and contacts the stereocilia bundles of specialized sensory hair cells. Sound induces movement of these hair cells relative to the tectorial membrane, deflects the stereocilia and leads to fluctuations in hair-cell membrane potential, transducing sound into electrical signals. This is Beta-tectorin (TECTB) from Homo sapiens (Human).